Consider the following 185-residue polypeptide: Large ribosomal subunit protein uL5 (185 aa).

This sequence belongs to the universal ribosomal protein uL5 family. As to quaternary structure, part of the 50S ribosomal subunit; part of the 5S rRNA/L5/L18/L25 subcomplex. Contacts the 5S rRNA and the P site tRNA. Forms a bridge to the 30S subunit in the 70S ribosome.

In terms of biological role, this is one of the proteins that bind and probably mediate the attachment of the 5S RNA into the large ribosomal subunit, where it forms part of the central protuberance. In the 70S ribosome it contacts protein S13 of the 30S subunit (bridge B1b), connecting the 2 subunits; this bridge is implicated in subunit movement. Contacts the P site tRNA; the 5S rRNA and some of its associated proteins might help stabilize positioning of ribosome-bound tRNAs. The chain is Large ribosomal subunit protein uL5 from Xanthobacter autotrophicus (strain ATCC BAA-1158 / Py2).